The primary structure comprises 300 residues: Haloalkane dehalogenase 1 (300 aa).

In terms of domain architecture, AB hydrolase-1 spans 47–176; the sequence is PPIVLLHGEP…FARYSPVLPA (130 aa). The active-site Nucleophile is the Asp123. Asp250 functions as the Proton donor in the catalytic mechanism. The Proton acceptor role is filled by His279.

This sequence belongs to the haloalkane dehalogenase family. Type 1 subfamily. In terms of assembly, monomer.

It carries out the reaction 1-haloalkane + H2O = a halide anion + a primary alcohol + H(+). Its function is as follows. Catalyzes hydrolytic cleavage of carbon-halogen bonds in halogenated aliphatic compounds, leading to the formation of the corresponding primary alcohols, halide ions and protons. This is Haloalkane dehalogenase 1 (dhmA1) from Mycobacterium bovis (strain ATCC BAA-935 / AF2122/97).